The sequence spans 179 residues: MLRFKELYQQKIIENLQKEFSYKNKHEIPQIKKIVINMGVGEAIADSKVINNAVNDLTCISGQKPVVTLARKSIATFKLRESMKIGCKVTLRKDRMYDFLERLVIVALPRVKEFRGFSDKSFDGKGNFTFGLKEQIVFPEINYDKIDTIRGMDITIVTSAKTDKESKFLLSGFNLPFYN.

This sequence belongs to the universal ribosomal protein uL5 family. As to quaternary structure, part of the 50S ribosomal subunit; part of the 5S rRNA/L5/L18/L25 subcomplex. Contacts the 5S rRNA and the P site tRNA. Forms a bridge to the 30S subunit in the 70S ribosome.

Functionally, this is one of the proteins that bind and probably mediate the attachment of the 5S RNA into the large ribosomal subunit, where it forms part of the central protuberance. In the 70S ribosome it contacts protein S13 of the 30S subunit (bridge B1b), connecting the 2 subunits; this bridge is implicated in subunit movement. Contacts the P site tRNA; the 5S rRNA and some of its associated proteins might help stabilize positioning of ribosome-bound tRNAs. This Rickettsia akari (strain Hartford) protein is Large ribosomal subunit protein uL5.